Here is a 328-residue protein sequence, read N- to C-terminus: Leucine carboxyl methyltransferase 1 (328 aa).

Residues arginine 81, glycine 105, aspartate 128, 175-177, and glutamate 201 each bind S-adenosyl-L-methionine; that span reads DLN.

This sequence belongs to the methyltransferase superfamily. LCMT family.

It catalyses the reaction [phosphatase 2A protein]-C-terminal L-leucine + S-adenosyl-L-methionine = [phosphatase 2A protein]-C-terminal L-leucine methyl ester + S-adenosyl-L-homocysteine. Its activity is regulated as follows. Inhibited by S-adenosyl-L-homocysteine. In terms of biological role, methylates the carboxyl group of the C-terminal leucine residue of protein phosphatase 2A catalytic subunits to form alpha-leucine ester residues. Acts on the two major protein phosphatase 2A catalytic subunits, PPH21 and PPH22. The polypeptide is Leucine carboxyl methyltransferase 1 (PPM1) (Saccharomyces cerevisiae (strain ATCC 204508 / S288c) (Baker's yeast)).